A 122-amino-acid chain; its full sequence is Prefoldin subunit 1 (122 aa).

At alanine 2 the chain carries N-acetylalanine.

Belongs to the prefoldin subunit beta family. As to quaternary structure, heterohexamer of two PFD-alpha type and four PFD-beta type subunits.

Binds specifically to cytosolic chaperonin (c-CPN) and transfers target proteins to it. Binds to nascent polypeptide chain and promotes folding in an environment in which there are many competing pathways for nonnative proteins. This chain is Prefoldin subunit 1 (PFDN1), found in Pongo abelii (Sumatran orangutan).